The following is a 69-amino-acid chain: DNA-directed RNA polymerase subunit omega (69 aa).

Belongs to the RNA polymerase subunit omega family. The RNAP catalytic core consists of 2 alpha, 1 beta, 1 beta' and 1 omega subunit. When a sigma factor is associated with the core the holoenzyme is formed, which can initiate transcription.

The enzyme catalyses RNA(n) + a ribonucleoside 5'-triphosphate = RNA(n+1) + diphosphate. Its function is as follows. Promotes RNA polymerase assembly. Latches the N- and C-terminal regions of the beta' subunit thereby facilitating its interaction with the beta and alpha subunits. The sequence is that of DNA-directed RNA polymerase subunit omega from Pelotomaculum thermopropionicum (strain DSM 13744 / JCM 10971 / SI).